We begin with the raw amino-acid sequence, 211 residues long: Small ribosomal subunit protein uS3 (211 aa).

The 69-residue stretch at 38 to 106 folds into the KH type-2 domain; sequence LRKFIKKAFY…NIELNIIEVK (69 aa).

Belongs to the universal ribosomal protein uS3 family. In terms of assembly, part of the 30S ribosomal subunit. Forms a tight complex with proteins S10 and S14.

Binds the lower part of the 30S subunit head. Binds mRNA in the 70S ribosome, positioning it for translation. The protein is Small ribosomal subunit protein uS3 of Ehrlichia chaffeensis (strain ATCC CRL-10679 / Arkansas).